The chain runs to 210 residues: Orotate phosphoribosyltransferase (210 aa).

Residues Arg-96, Lys-100, His-102, and 122 to 130 each bind 5-phospho-alpha-D-ribose 1-diphosphate; that span reads EDLISTGGS. Residue Ser-126 participates in orotate binding.

Belongs to the purine/pyrimidine phosphoribosyltransferase family. PyrE subfamily. Homodimer. Requires Mg(2+) as cofactor.

The catalysed reaction is orotidine 5'-phosphate + diphosphate = orotate + 5-phospho-alpha-D-ribose 1-diphosphate. The protein operates within pyrimidine metabolism; UMP biosynthesis via de novo pathway; UMP from orotate: step 1/2. Its function is as follows. Catalyzes the transfer of a ribosyl phosphate group from 5-phosphoribose 1-diphosphate to orotate, leading to the formation of orotidine monophosphate (OMP). The sequence is that of Orotate phosphoribosyltransferase from Streptococcus pneumoniae (strain ATCC BAA-255 / R6).